We begin with the raw amino-acid sequence, 217 residues long: Cytidylate kinase (217 aa).

21-29 lines the ATP pocket; that stretch reads GPAASGKGT.

Belongs to the cytidylate kinase family. Type 1 subfamily.

The protein resides in the cytoplasm. The enzyme catalyses CMP + ATP = CDP + ADP. It carries out the reaction dCMP + ATP = dCDP + ADP. The protein is Cytidylate kinase of Rickettsia bellii (strain OSU 85-389).